The chain runs to 299 residues: ATP phosphoribosyltransferase (299 aa).

Belongs to the ATP phosphoribosyltransferase family. Long subfamily. As to quaternary structure, equilibrium between an active dimeric form, an inactive hexameric form and higher aggregates. Interconversion between the various forms is largely reversible and is influenced by the natural substrates and inhibitors of the enzyme. It depends on Mg(2+) as a cofactor.

Its subcellular location is the cytoplasm. The enzyme catalyses 1-(5-phospho-beta-D-ribosyl)-ATP + diphosphate = 5-phospho-alpha-D-ribose 1-diphosphate + ATP. It participates in amino-acid biosynthesis; L-histidine biosynthesis; L-histidine from 5-phospho-alpha-D-ribose 1-diphosphate: step 1/9. Its activity is regulated as follows. Feedback inhibited by histidine. In terms of biological role, catalyzes the condensation of ATP and 5-phosphoribose 1-diphosphate to form N'-(5'-phosphoribosyl)-ATP (PR-ATP). Has a crucial role in the pathway because the rate of histidine biosynthesis seems to be controlled primarily by regulation of HisG enzymatic activity. The sequence is that of ATP phosphoribosyltransferase from Buchnera aphidicola subsp. Diuraphis noxia.